A 477-amino-acid chain; its full sequence is Ribulose bisphosphate carboxylase large chain (477 aa).

A propeptide spanning residues 1–2 is cleaved from the precursor; it reads MS. At Pro3 the chain carries N-acetylproline. Residue Lys14 is modified to N6,N6,N6-trimethyllysine. Residues Asn123 and Thr173 each contribute to the substrate site. The Proton acceptor role is filled by Lys175. Residue Lys177 coordinates substrate. Residues Lys201, Asp203, and Glu204 each contribute to the Mg(2+) site. Position 201 is an N6-carboxylysine (Lys201). His294 (proton acceptor) is an active-site residue. Substrate is bound by residues Arg295, His327, and Ser379.

Belongs to the RuBisCO large chain family. Type I subfamily. Heterohexadecamer of 8 large chains and 8 small chains; disulfide-linked. The disulfide link is formed within the large subunit homodimers. Mg(2+) is required as a cofactor. Post-translationally, the disulfide bond which can form in the large chain dimeric partners within the hexadecamer appears to be associated with oxidative stress and protein turnover.

Its subcellular location is the plastid. The protein resides in the chloroplast. It carries out the reaction 2 (2R)-3-phosphoglycerate + 2 H(+) = D-ribulose 1,5-bisphosphate + CO2 + H2O. The enzyme catalyses D-ribulose 1,5-bisphosphate + O2 = 2-phosphoglycolate + (2R)-3-phosphoglycerate + 2 H(+). RuBisCO catalyzes two reactions: the carboxylation of D-ribulose 1,5-bisphosphate, the primary event in carbon dioxide fixation, as well as the oxidative fragmentation of the pentose substrate in the photorespiration process. Both reactions occur simultaneously and in competition at the same active site. The protein is Ribulose bisphosphate carboxylase large chain of Oryza nivara (Indian wild rice).